The sequence spans 56 residues: Ovomucoid (56 aa).

Positions 6-56 (VDCSEYPKPDCTTEERPLCGSDNKTYGNKCNFCNAVVESNGTLTLSHFGKC) constitute a Kazal-like domain. 3 disulfides stabilise this stretch: Cys-8–Cys-38, Cys-16–Cys-35, and Cys-24–Cys-56. N-linked (GlcNAc...) asparagine glycosylation occurs at Asn-45.

Its subcellular location is the secreted. In Francolinus pondicerianus (Grey francolin), this protein is Ovomucoid.